The sequence spans 224 residues: UPF0758 protein BLi02933/BL00636 (224 aa).

An MPN domain is found at 102–224; sequence VIRFPEDAAN…FVSLKEKGYL (123 aa). Residues H173, H175, and D186 each contribute to the Zn(2+) site. Residues 173 to 186 carry the JAMM motif motif; sequence HNHPSGDPAPSRED.

This sequence belongs to the UPF0758 family.

The chain is UPF0758 protein BLi02933/BL00636 from Bacillus licheniformis (strain ATCC 14580 / DSM 13 / JCM 2505 / CCUG 7422 / NBRC 12200 / NCIMB 9375 / NCTC 10341 / NRRL NRS-1264 / Gibson 46).